The following is a 173-amino-acid chain: Transcription factor E (173 aa).

The HTH TFE/IIEalpha-type domain maps to N9–Y92.

Belongs to the TFE family. As to quaternary structure, monomer. Interaction with RNA polymerase subunits RpoF and RpoE is necessary for Tfe stimulatory transcription activity. Able to interact with Tbp and RNA polymerase in the absence of DNA promoter. Interacts both with the preinitiation and elongation complexes.

Its function is as follows. Transcription factor that plays a role in the activation of archaeal genes transcribed by RNA polymerase. Facilitates transcription initiation by enhancing TATA-box recognition by TATA-box-binding protein (Tbp), and transcription factor B (Tfb) and RNA polymerase recruitment. Not absolutely required for transcription in vitro, but particularly important in cases where Tbp or Tfb function is not optimal. It dynamically alters the nucleic acid-binding properties of RNA polymerases by stabilizing the initiation complex and destabilizing elongation complexes. Seems to translocate with the RNA polymerase following initiation and acts by binding to the non template strand of the transcription bubble in elongation complexes. The chain is Transcription factor E from Methanoregula boonei (strain DSM 21154 / JCM 14090 / 6A8).